We begin with the raw amino-acid sequence, 555 residues long: Glutamine--tRNA ligase (555 aa).

The short motif at 34–44 (PEPNGYLHIGH) is the 'HIGH' region element. ATP is bound by residues 35–37 (EPN) and 41–47 (HIGHAKS). 2 residues coordinate L-glutamine: D67 and Y212. ATP contacts are provided by residues T231, 261-262 (RL), and 269-271 (MSK). The 'KMSKS' region signature appears at 268-272 (IMSKR).

This sequence belongs to the class-I aminoacyl-tRNA synthetase family. Monomer.

It localises to the cytoplasm. The enzyme catalyses tRNA(Gln) + L-glutamine + ATP = L-glutaminyl-tRNA(Gln) + AMP + diphosphate. This chain is Glutamine--tRNA ligase, found in Yersinia pseudotuberculosis serotype O:3 (strain YPIII).